The chain runs to 777 residues: Ethylene receptor 4 (777 aa).

A run of 3 helical transmembrane segments spans residues 49–69, 77–97, and 113–133; these read LLIAASFLSIPLELFYFATCA, AVLHFCAFIVLCGATHLLAAF, and AAKVLAAVASSAAAVSLLTFI. Residues Cys88 and His92 each contribute to the Cu cation site. One can recognise a GAF domain in the interval 184 to 344; that stretch reads DAHAILRTTA…VVADQAAVAL (161 aa). A Histidine kinase domain is found at 387-521; sequence AMCHAMRRPV…NTESGACRLS (135 aa). His390 carries the post-translational modification Phosphohistidine; by autocatalysis. Residues 645 to 774 enclose the Response regulatory domain; the sequence is RVLLADDDAM…ALGAQLCRVL (130 aa). Asp696 carries the 4-aspartylphosphate modification.

The protein belongs to the ethylene receptor family. Cu cation is required as a cofactor.

It localises to the endoplasmic reticulum membrane. The enzyme catalyses ATP + protein L-histidine = ADP + protein N-phospho-L-histidine.. Functionally, ethylene receptor related to bacterial two-component regulators. Acts as a redundant negative regulator of ethylene signaling. In Oryza sativa subsp. indica (Rice), this protein is Ethylene receptor 4.